The primary structure comprises 316 residues: NADH-cytochrome b5 reductase-like (316 aa).

In terms of domain architecture, Oxidoreductase-like spans 17-53 (KPVEPLPSQCCGSGCSPCVFDLYYRDLERWETARARN). The FAD-binding FR-type domain maps to 76–178 (ETFLAFHIST…RGPFGSFLYE (103 aa)). Residues 158–173 (ESWR…GPFG) and 183–215 (GELL…TFVT) contribute to the FAD site.

Belongs to the flavoprotein pyridine nucleotide cytochrome reductase family. The cofactor is FAD.

The enzyme catalyses 2 Fe(III)-[cytochrome b5] + NADH = 2 Fe(II)-[cytochrome b5] + NAD(+) + H(+). In terms of biological role, NADH-cytochrome b5 reductases are involved in desaturation and elongation of fatty acids, cholesterol biosynthesis, drug metabolism, and, in erythrocyte, methemoglobin reduction. The polypeptide is NADH-cytochrome b5 reductase-like (Cyb5rl) (Mus musculus (Mouse)).